A 576-amino-acid chain; its full sequence is RNA-binding post-transcriptional regulator cip2 (576 aa).

In terms of domain architecture, RRM spans 232–310 (TAIVIKNIPF…RRLRVEWKRQ (79 aa)). The R3H domain occupies 355 to 420 (DPAILNVYSH…AKQVVITMPS (66 aa)).

As to quaternary structure, interacts with csx1. In terms of processing, phosphorylated by sty1.

It is found in the cytoplasm. Regulates global gene expression after oxidative stress. Interacts and stabilizes mRNAs and may regulate their transition between different cytoplasmic components after oxidative stress. This chain is RNA-binding post-transcriptional regulator cip2 (cip2), found in Schizosaccharomyces pombe (strain 972 / ATCC 24843) (Fission yeast).